The chain runs to 341 residues: Aspartate--ammonia ligase (341 aa).

Belongs to the class-II aminoacyl-tRNA synthetase family. AsnA subfamily.

Its subcellular location is the cytoplasm. The enzyme catalyses L-aspartate + NH4(+) + ATP = L-asparagine + AMP + diphosphate + H(+). The protein operates within amino-acid biosynthesis; L-asparagine biosynthesis; L-asparagine from L-aspartate (ammonia route): step 1/1. The polypeptide is Aspartate--ammonia ligase (Clostridium tetani (strain Massachusetts / E88)).